The primary structure comprises 250 residues: NAD-dependent protein deacylase (250 aa).

The region spanning 1-250 (MIVEVARVLA…VVHEVRRLLQ (250 aa)) is the Deacetylase sirtuin-type domain. 20-39 (GAGISAESGVPTFRGKDGLW) contacts NAD(+). Residues Y64 and R67 each contribute to the substrate site. 98-101 (QNVD) contacts NAD(+). The Proton acceptor role is filled by H116. The Zn(2+) site is built by C124, C127, C150, and C153. NAD(+) is bound by residues 190–192 (GTS), 216–218 (NVE), and A234.

It belongs to the sirtuin family. Class III subfamily. The cofactor is Zn(2+).

The protein resides in the cytoplasm. The catalysed reaction is N(6)-acetyl-L-lysyl-[protein] + NAD(+) + H2O = 2''-O-acetyl-ADP-D-ribose + nicotinamide + L-lysyl-[protein]. The enzyme catalyses N(6)-succinyl-L-lysyl-[protein] + NAD(+) + H2O = 2''-O-succinyl-ADP-D-ribose + nicotinamide + L-lysyl-[protein]. Functionally, NAD-dependent lysine deacetylase and desuccinylase that specifically removes acetyl and succinyl groups on target proteins. Modulates the activities of several proteins which are inactive in their acylated form. Deacetylates the N-terminal lysine residue of Alba, the major archaeal chromatin protein and that, in turn, increases Alba's DNA binding affinity, thereby repressing transcription. In Pyrococcus abyssi (strain GE5 / Orsay), this protein is NAD-dependent protein deacylase.